We begin with the raw amino-acid sequence, 515 residues long: Cell division control protein 6 homolog (515 aa).

Residues 1-24 (MPTLRSATASASTAGTASPTAIAT) show a composition bias toward low complexity. The tract at residues 1–70 (MPTLRSATAS…TPKLLSASPR (70 aa)) is disordered. Residues 43-52 (DASQFTSPHK) are compositionally biased toward polar residues.

Belongs to the CDC6/cdc18 family.

It localises to the nucleus. Functionally, may be involved in the initiation of DNA replication. This Oryza sativa subsp. japonica (Rice) protein is Cell division control protein 6 homolog.